The following is a 579-amino-acid chain: 3-hydroxy-3-methylglutaryl-coenzyme A reductase (579 aa).

Residues 1 to 22 (MEVRGGVGQGSAARHPPAPEPS) form a disordered region. 2 helical membrane passes run 36–56 (LPIR…LAYL) and 80–100 (AIFG…IAFV). The interval 101-153 (QSIVSSGDDDEDFLVGSGSSGSAAAPSRQHAQAPAPCELLGSPAAAPEKMPED) is linker. The catalytic stretch occupies residues 154–579 (DEEIVASVVA…EKTRQREVDV (426 aa)). Glu-247 functions as the Charge relay system in the catalytic mechanism. The N-linked (GlcNAc...) asparagine glycan is linked to Asn-311. Active-site charge relay system residues include Lys-379 and Asp-455. A helical transmembrane segment spans residues 524 to 544 (LLATVVAGGVLAGELSLLSAL). His-553 functions as the Proton donor in the catalytic mechanism. Residues 555 to 579 (KYNRSSKDVSSTTATEKTRQREVDV) form a disordered region. Asn-557 carries an N-linked (GlcNAc...) asparagine glycan. The span at 570–579 (EKTRQREVDV) shows a compositional bias: basic and acidic residues.

This sequence belongs to the HMG-CoA reductase family.

It is found in the endoplasmic reticulum membrane. It carries out the reaction (R)-mevalonate + 2 NADP(+) + CoA = (3S)-3-hydroxy-3-methylglutaryl-CoA + 2 NADPH + 2 H(+). The protein operates within metabolic intermediate biosynthesis; (R)-mevalonate biosynthesis; (R)-mevalonate from acetyl-CoA: step 3/3. Functionally, catalyzes the synthesis of mevalonate. The specific precursor of all isoprenoid compounds present in plants. The sequence is that of 3-hydroxy-3-methylglutaryl-coenzyme A reductase (HMGR) from Zea mays (Maize).